Here is a 313-residue protein sequence, read N- to C-terminus: GDP-D-glycero-alpha-D-manno-heptose dehydrogenase (313 aa).

Residues 13 to 14 (YI), 33 to 39 (DNLMFDQ), phenylalanine 37, 57 to 58 (DA), leucine 77, and 144 to 148 (YGIDK) each bind NADH. Threonine 168 is a GDP binding site. NADH-binding positions include valine 169 and 175 to 177 (RMR). GDP contacts are provided by residues 179-184 (DLLVND), 196-198 (VLF), arginine 204, lysine 242, and arginine 270. Position 311 (asparagine 311) interacts with NADH.

Homotetramer. It depends on NAD(+) as a cofactor.

It carries out the reaction GDP-D-glycero-alpha-D-manno-heptose + 2-oxoglutarate = GDP-D-glycero-4-keto-alpha-D-lyxo-heptose + (S)-2-hydroxyglutarate. Its pathway is capsule biogenesis; capsule polysaccharide biosynthesis. Its function is as follows. NAD-dependent dehydrogenase involved in the biosynthesis of heptose moieties with a hydroxyl group at C6 found on the capsular polysaccharide (CPS) of C.jejuni. Catalyzes the initial oxidation of C4 of the GDP-D-glycero-alpha-D-manno-heptose to form GDP-D-glycero-4-keto-alpha-D-lyxo-heptose in the presence of alpha-ketoglutarate required to recycle the NADH nucleotide. The sequence is that of GDP-D-glycero-alpha-D-manno-heptose dehydrogenase from Campylobacter jejuni subsp. jejuni serotype O:2 (strain ATCC 700819 / NCTC 11168).